We begin with the raw amino-acid sequence, 135 residues long: Large ribosomal subunit protein uL16m (135 aa).

The protein belongs to the universal ribosomal protein uL16 family.

The protein resides in the mitochondrion. This Prototheca wickerhamii protein is Large ribosomal subunit protein uL16m (RPL16).